The sequence spans 311 residues: MAEASPHPGRYFCHCCSVEIVPRLPDYICPRCESGFIEELPEETRSTENGSAPSTAPTDQSRPPLEHVDQHLFTLPQGYGQFAFGIFDDSFEIPTFPPGAQADDGRDPESRRERDHPSRHRYGARQPRARLTTRRATGRHEGVPTLEGIIQQLVNGIITPATIPSLGPWGVLHSNPMDYAWGANGLDAIITQLLNQFENTGPPPADKEKIQALPTVPVTEEHVGSGLECPVCKDDYALGERVRQLPCNHLFHDGCIVPWLEQHDSCPVCRKSLTGQNTATNPPGLTGVSFSSSSSSSSSSSPSNENATSNS.

An N-acetylalanine modification is found at alanine 2. Position 5 is a phosphoserine (serine 5). Residues 5–100 (SPHPGRYFCH…FEIPTFPPGA (96 aa)) are required for interaction with BAG6. 4 residues coordinate Zn(2+): cysteine 13, cysteine 16, cysteine 29, and cysteine 32. The segment at 13-32 (CHCCSVEIVPRLPDYICPRC) adopts a C4-type zinc-finger fold. 2 disordered regions span residues 42-64 (EETR…SRPP) and 94-132 (PTFP…ARLT). Positions 47–61 (TENGSAPSTAPTDQS) are enriched in polar residues. Over residues 103-116 (DDGRDPESRRERDH) the composition is skewed to basic and acidic residues. Basic residues predominate over residues 117-132 (PSRHRYGARQPRARLT). The sufficient for interaction with AICDA stretch occupies residues 200-304 (TGPPPADKEK…SSSSSSSPSN (105 aa)). The segment at 229 to 270 (CPVCKDDYALGERVRQLPCNHLFHDGCIVPWLEQHDSCPVCR) adopts an RING-type zinc-finger fold. The tract at residues 277–311 (NTATNPPGLTGVSFSSSSSSSSSSSPSNENATSNS) is disordered. Residues 289–311 (SFSSSSSSSSSSSPSNENATSNS) are compositionally biased toward low complexity.

In terms of assembly, interacts with CCDC50, EGFR, FLT3 and SCAMP3. Interacts with BAG6 (via ubiquitin-like domain); required for BAG6-dependent ubiquitination of proteins mislocalized to the cytosol. Interacts with CDKN1A. Interacts with AICDA. In terms of processing, ubiquitinated. May undergo autoubiquitination. As to expression, highly expressed in liver and testis.

It localises to the cytoplasm. Its subcellular location is the nucleus. It catalyses the reaction S-ubiquitinyl-[E2 ubiquitin-conjugating enzyme]-L-cysteine + [acceptor protein]-L-lysine = [E2 ubiquitin-conjugating enzyme]-L-cysteine + N(6)-ubiquitinyl-[acceptor protein]-L-lysine.. It participates in protein modification; protein ubiquitination. In terms of biological role, E3 ubiquitin-protein ligase that mediates ubiquitination oF target proteins. Depending on the associated E2 ligase, mediates 'Lys-27'-, 'Lys-29'-, 'Lys-48'- and/or 'Lys-63'-linked polyubiquitination of substrates. Part of a BAG6-dependent quality control process ensuring that proteins of the secretory pathway that are mislocalized to the cytosol are degraded by the proteasome. Probably acts by providing the ubiquitin ligase activity associated with the BAG6 complex and be responsible for ubiquitination of the hydrophobic mislocalized proteins and their targeting to the proteasome. May also play a role in the endosomal recycling of IGF2R, the cation-independent mannose-6-phosphate receptor. May play a role in the endosomal sorting and degradation of several membrane receptors including EGFR, FLT3, MET and CXCR4, by mediating their ubiquitination. By ubiquitinating CDKN1A/p21 and targeting it for degradation, may also promote cell proliferation. May monoubiquitinate AICDA. Acts as a regulator of DNA repair by mediating 'Lys-27'- and 'Lys-29'-linked polyubiquitination of MRE11, thereby promoting the exonuclease activity of MRE11. This is E3 ubiquitin-protein ligase RNF126 from Homo sapiens (Human).